The chain runs to 514 residues: MNNLFALCQRSAVIFSIIFTVVACDKLDSPKPISPQIETQKNTQLESNRVELKRGVYSDLTLQPWQAQSEEQTQLLRDLFEGLTAYDVQGNLVPAVAENWQTEDNKTWIFTLRENAKWSNGEPITASDFVQSWQTLSQSESPLKNYLAFMNLKNAKAVLEKALPVESLGLFAENDRTLRIELDKASPYLPSMLAHVSLLPHYAKSTEIFISNGAYQLQRQAENQHILTTNPYYWAKEKVIFQQVKYQKISVDADLSDFDVVMNPKKVNQNIQDYPQLCTYFYEFNLSDPVLQKSAVRKAIVSMISTNNLVADIAHLYPNNTFLPKSMLGEQESVWEPVVAEQLFSQNQISETRPLKLRIRYDDLSLNQTIAMRLNHQLSQSDLLRVENQGMSWQELQTARTKGDFQLIRSGWCADFNDPAAFLNLFYSKSPDNKNGYKNAEFDRLFESAMTTISEKVRLENYAKLKGIVQQEHLVLPIFQYSTPVYLVPSIMGAQVNSVGVIYSKDLWRKVQSQ.

The N-terminal stretch at 1–23 (MNNLFALCQRSAVIFSIIFTVVA) is a signal peptide. C24 carries the N-palmitoyl cysteine lipid modification. The S-diacylglycerol cysteine moiety is linked to residue C24.

It belongs to the bacterial solute-binding protein 5 family.

It is found in the cell membrane. In terms of biological role, part of a binding-protein-dependent transport system. This chain is Putative binding protein HI_0213, found in Haemophilus influenzae (strain ATCC 51907 / DSM 11121 / KW20 / Rd).